An 89-amino-acid polypeptide reads, in one-letter code: Putative defensin-like protein 40 (89 aa).

The N-terminal stretch at 1-26 is a signal peptide; it reads MAGIANGVGLLISFMLICGGMPKGHA. 4 disulfide bridges follow: Cys-33–Cys-88, Cys-46–Cys-69, Cys-55–Cys-81, and Cys-59–Cys-83.

It belongs to the DEFL family.

The protein localises to the secreted. This chain is Putative defensin-like protein 40, found in Arabidopsis thaliana (Mouse-ear cress).